The following is a 387-amino-acid chain: Alkanesulfonate monooxygenase (387 aa).

It belongs to the SsuD family.

The enzyme catalyses an alkanesulfonate + FMNH2 + O2 = an aldehyde + FMN + sulfite + H2O + 2 H(+). Functionally, catalyzes the desulfonation of aliphatic sulfonates. The sequence is that of Alkanesulfonate monooxygenase from Ralstonia nicotianae (strain ATCC BAA-1114 / GMI1000) (Ralstonia solanacearum).